Reading from the N-terminus, the 60-residue chain is UPF0434 protein ETA_21370 (60 aa).

This sequence belongs to the UPF0434 family.

The polypeptide is UPF0434 protein ETA_21370 (Erwinia tasmaniensis (strain DSM 17950 / CFBP 7177 / CIP 109463 / NCPPB 4357 / Et1/99)).